The chain runs to 46 residues: Protein krueppel (46 aa).

C2H2-type zinc fingers lie at residues 1 to 4, 10 to 32, and 38 to 46; these read MRLH, YHCT…LRVH, and YACELCTSK.

The protein belongs to the krueppel C2H2-type zinc-finger protein family.

The protein localises to the nucleus. In terms of biological role, krueppel is a gap class segmentation protein. The sequence is that of Protein krueppel (Kr) from Lithobius forficatus (Centipede).